A 356-amino-acid polypeptide reads, in one-letter code: tRNA N6-adenosine threonylcarbamoyltransferase (356 aa).

Residues His-111 and His-115 each contribute to the Fe cation site. Substrate is bound by residues 143–147 (LASGG), Asp-178, Gly-191, Asp-195, and Asn-286. Asp-314 is a binding site for Fe cation.

This sequence belongs to the KAE1 / TsaD family. Fe(2+) is required as a cofactor.

The protein localises to the cytoplasm. The enzyme catalyses L-threonylcarbamoyladenylate + adenosine(37) in tRNA = N(6)-L-threonylcarbamoyladenosine(37) in tRNA + AMP + H(+). Its function is as follows. Required for the formation of a threonylcarbamoyl group on adenosine at position 37 (t(6)A37) in tRNAs that read codons beginning with adenine. Is involved in the transfer of the threonylcarbamoyl moiety of threonylcarbamoyl-AMP (TC-AMP) to the N6 group of A37, together with TsaE and TsaB. TsaD likely plays a direct catalytic role in this reaction. The protein is tRNA N6-adenosine threonylcarbamoyltransferase of Sorangium cellulosum (strain So ce56) (Polyangium cellulosum (strain So ce56)).